Here is a 392-residue protein sequence, read N- to C-terminus: Galactokinase (392 aa).

40-43 (EHID) contributes to the substrate binding site. Residues Ser-74 and 128–134 (GSGLSSS) contribute to the ATP site. Ser-134 and Glu-167 together coordinate Mg(2+). The active-site Proton acceptor is Asp-179. Tyr-229 is a binding site for substrate.

This sequence belongs to the GHMP kinase family. GalK subfamily.

It is found in the cytoplasm. The enzyme catalyses alpha-D-galactose + ATP = alpha-D-galactose 1-phosphate + ADP + H(+). It participates in carbohydrate metabolism; galactose metabolism. In terms of biological role, catalyzes the transfer of the gamma-phosphate of ATP to D-galactose to form alpha-D-galactose-1-phosphate (Gal-1-P). This is Galactokinase from Clostridium tetani (strain Massachusetts / E88).